We begin with the raw amino-acid sequence, 319 residues long: Ribosomal protein uL3 glutamine methyltransferase (319 aa).

This sequence belongs to the protein N5-glutamine methyltransferase family. PrmB subfamily.

The catalysed reaction is L-glutaminyl-[ribosomal protein uL3] + S-adenosyl-L-methionine = N(5)-methyl-L-glutaminyl-[ribosomal protein uL3] + S-adenosyl-L-homocysteine + H(+). Its function is as follows. Methylates large ribosomal subunit protein uL3 on a specific glutamine residue. The protein is Ribosomal protein uL3 glutamine methyltransferase of Bradyrhizobium diazoefficiens (strain JCM 10833 / BCRC 13528 / IAM 13628 / NBRC 14792 / USDA 110).